Consider the following 343-residue polypeptide: GTPase Obg (343 aa).

One can recognise an Obg domain in the interval 1-159 (MKYIDEVKIQ…FELKLELRVL (159 aa)). Residues 160–334 (ADVGLLGLPN…LTYAIMGYLE (175 aa)) enclose the OBG-type G domain. Residues 166 to 173 (GLPNAGKS), 191 to 195 (FTTLY), 213 to 216 (DIPG), 284 to 287 (NKVD), and 315 to 317 (SAL) each bind GTP. Mg(2+)-binding residues include S173 and T193.

This sequence belongs to the TRAFAC class OBG-HflX-like GTPase superfamily. OBG GTPase family. In terms of assembly, monomer. Mg(2+) serves as cofactor.

The protein localises to the cytoplasm. Functionally, an essential GTPase which binds GTP, GDP and possibly (p)ppGpp with moderate affinity, with high nucleotide exchange rates and a fairly low GTP hydrolysis rate. Plays a role in control of the cell cycle, stress response, ribosome biogenesis and in those bacteria that undergo differentiation, in morphogenesis control. The sequence is that of GTPase Obg from Nitrosomonas eutropha (strain DSM 101675 / C91 / Nm57).